The chain runs to 519 residues: Cytochrome P450 monooxygenase FPY7 (519 aa).

A helical transmembrane segment spans residues Ser-12 to Thr-34. Residue Cys-465 coordinates heme.

The protein belongs to the cytochrome P450 family. Requires heme as cofactor.

It localises to the membrane. The protein operates within secondary metabolite biosynthesis. Its function is as follows. Cytochrome P450 monooxygenase; part of the gene cluster that mediates the biosynthesis of the gamma-pyrones fusapyrone (FPY) and deoxyfusapyrone (dFPY). FPY is an undecaketide and thus likely synthesized by the polyketide synthase FPY1 from acetyl-CoA functioning as starter unit and the addition of 10 malonyl-CoA extender units by successive Claisen-condensations. Next to this, FPY shares some rare features: C-glycosylated 4-deoxyglucose at C-3, a gem-dimethyl group at C-13, and an alpha-beta to beta-gamma double bond shift at C-20. During FPY biosynthesis mono-C-methyl groups are transferred to the tetra-, penta-, hexa- and heptaketide, while two C-methyl groups are transferred to the nonaketide, suggesting that the CMet domain is programmed to selectively catalyze two successive C-alpha-methylation reactions of the nonaketide, while other alpha-carbons are non- or mono-methylated only. While the origin of the 4'-deoxyglucose moiety remains opaque, its transfer to C-3 is most likely mediated by the C-glycosyltransferase FPY2. Next to this, the hydroxyl group present at C-33 and discriminating between FPY and dFPY, is likely to be installed by the cytochrome P450 monooxygenase FPY7. No putative function can be predicted for the remaining genes FPY3-FPY6. The protein is Cytochrome P450 monooxygenase FPY7 of Fusarium mangiferae (Mango malformation disease fungus).